We begin with the raw amino-acid sequence, 198 residues long: Probable molybdenum cofactor guanylyltransferase (198 aa).

GTP is bound by residues 9–11, lysine 22, aspartate 66, and aspartate 95; that span reads LAG. Mg(2+) is bound at residue aspartate 95.

This sequence belongs to the MobA family. Requires Mg(2+) as cofactor.

It is found in the cytoplasm. The enzyme catalyses Mo-molybdopterin + GTP + H(+) = Mo-molybdopterin guanine dinucleotide + diphosphate. Functionally, transfers a GMP moiety from GTP to Mo-molybdopterin (Mo-MPT) cofactor (Moco or molybdenum cofactor) to form Mo-molybdopterin guanine dinucleotide (Mo-MGD) cofactor. The polypeptide is Probable molybdenum cofactor guanylyltransferase (Clostridium perfringens (strain SM101 / Type A)).